Consider the following 147-residue polypeptide: MSHRVSILSSHFSPASAVMASEKEAALAATPSDSPTIFDKIISKEIPSTVVFEDDKVLAFRDITPQGPVHILLIPKVRDGLTGLSKAEERHIDILGRLLYTAKLVAKQEGLAEGFRIVINDGPQGCQSVYHIHVHLIGGRQMNWPPG.

The HIT domain maps to 37–147 (IFDKIISKEI…GGRQMNWPPG (111 aa)). The short motif at 131 to 135 (HIHVH) is the Histidine triad motif element. H133 functions as the Tele-AMP-histidine intermediate in the catalytic mechanism. Position 135 (H135) interacts with substrate.

Its subcellular location is the peroxisome. It is found in the plastid. The protein resides in the chloroplast. The enzyme catalyses adenosine 5'-phosphosulfate + H2O = sulfate + AMP + 2 H(+). Possesses adenylylsulfatase activity in vitro. The chain is Adenylylsulfatase HINT1 from Arabidopsis thaliana (Mouse-ear cress).